Consider the following 225-residue polypeptide: J-type co-chaperone jac1, mitochondrial (225 aa).

The N-terminal 49 residues, 1–49 (MLKQAGNQSFRPFISFAQKSLFNRQITGNHWIFARFKFYPLNKIVNYNH), are a transit peptide targeting the mitochondrion. One can recognise a J domain in the interval 61-137 (NFYKQFEGDI…LTRAEYILQL (77 aa)). The short motif at 98–100 (HPD) is the HSP70 binding element.

This sequence belongs to the HscB family. As to quaternary structure, interacts with ssc1.

Its subcellular location is the mitochondrion matrix. Functionally, co-chaperone required for the assembly of iron-sulfur (Fe/S) clusters in mitochondria. Stimulates the ATPase activity of the mitochondrial Hsp70 chaperone ssc1, to mediate the transfer of iron-sulfur clusters from isu1 to grx5. This chain is J-type co-chaperone jac1, mitochondrial, found in Schizosaccharomyces pombe (strain 972 / ATCC 24843) (Fission yeast).